Consider the following 250-residue polypeptide: Archaeal flagellar motor scaffold protein FlaX (250 aa).

Topologically, residues 1–9 (MAIQDLLQS) are extracellular. The chain crosses the membrane as a helical span at residues 10 to 30 (SLFIILIGVGIPIAAFLEILF). The Cytoplasmic segment spans residues 31–250 (RVILPKTKRV…MILEGGGVNG (220 aa)). Over residues 42-61 (TQQSPQNISQEQRFPTQQKP) the composition is skewed to polar residues. Positions 42 to 72 (TQQSPQNISQEQRFPTQQKPANDETSKYSSD) are disordered. Residues 62 to 72 (ANDETSKYSSD) are compositionally biased toward basic and acidic residues.

In terms of assembly, the S.acidocaldarius archaellum assembly machinery and its filament consist of seven proteins (FlaB, FlaF, FlaG, FlaH, FlaI, FlaJ and FlaX). FlaX assembles into ring-shaped oligomers. Interacts directly with FlaH and the motor ATPase FlaI.

It is found in the archaeal flagellum. The protein resides in the cell membrane. With respect to regulation, the presence of the flagellar core components FlaH, FlaI and FlaJ seems to be crucial for the stability of FlaX. In terms of biological role, component of the archaellum. FlaX, FlaH and FlaI form the core cytoplasmic motor complex of the crenarchaeal archaellum. FlaX forms a ring that may act as a membrane-bound cytoplasmic scaffold that guides the assembly of the archaellum motor complex. Is essential for archaellum assembly. This Sulfolobus acidocaldarius (strain ATCC 33909 / DSM 639 / JCM 8929 / NBRC 15157 / NCIMB 11770) protein is Archaeal flagellar motor scaffold protein FlaX.